A 108-amino-acid chain; its full sequence is UPF0060 membrane protein RER_49640 (108 aa).

4 helical membrane passes run 8 to 28, 33 to 53, 62 to 82, and 87 to 107; these read LLFV…WQGI, GWIW…VATM, ILAA…VVMD, and DRFD…IMYA.

Belongs to the UPF0060 family.

It is found in the cell membrane. The chain is UPF0060 membrane protein RER_49640 from Rhodococcus erythropolis (strain PR4 / NBRC 100887).